The primary structure comprises 140 residues: Lymphocyte antigen 6 complex locus protein G5c (140 aa).

The signal sequence occupies residues 1–41; that stretch reads MRFMAGPAGSQNPGPMCFHSSLQALYTVLLIVLVMMSLVFG. Residues 60–140 form the UPAR/Ly6 domain; sequence LRCYRCLLET…SQCCFLGFLQ (81 aa). Intrachain disulfides connect Cys-62/Cys-89, Cys-65/Cys-74, Cys-81/Cys-107, and Cys-116/Cys-133. Asn-96 is a glycosylation site (N-linked (GlcNAc...) asparagine).

In terms of assembly, forms oligomers. In terms of processing, N-glycosylated.

Its subcellular location is the secreted. May have a role in hematopoietic cell differentiation. This Macaca mulatta (Rhesus macaque) protein is Lymphocyte antigen 6 complex locus protein G5c (LY6G5C).